A 296-amino-acid polypeptide reads, in one-letter code: Thiamine-monophosphate kinase (296 aa).

Residues Asp-32, Thr-46, and Asp-48 each coordinate Mg(2+). Asp-55 is a substrate binding site. The Mg(2+) site is built by Asp-76 and Asp-121. ATP is bound by residues 120–121 and Arg-144; that span reads GD. Asp-206 provides a ligand contact to Mg(2+). Position 208 (Ser-208) interacts with ATP. Asp-209 contributes to the Mg(2+) binding site. Tyr-293 is a binding site for substrate.

It belongs to the thiamine-monophosphate kinase family.

It catalyses the reaction thiamine phosphate + ATP = thiamine diphosphate + ADP. The protein operates within cofactor biosynthesis; thiamine diphosphate biosynthesis; thiamine diphosphate from thiamine phosphate: step 1/1. Functionally, catalyzes the ATP-dependent phosphorylation of thiamine-monophosphate (TMP) to form thiamine-pyrophosphate (TPP), the active form of vitamin B1. This chain is Thiamine-monophosphate kinase, found in Archaeoglobus fulgidus (strain ATCC 49558 / DSM 4304 / JCM 9628 / NBRC 100126 / VC-16).